The primary structure comprises 1236 residues: DNA-directed RNA polymerase subunit beta (1236 aa).

Residues 1185-1236 form a disordered region; it reads IEGSEDYTEPKQPNDNYLEEEENKDKESDYDEDLNFDDLTKGLQLDDFNDEH. Residues 1201-1220 are compositionally biased toward acidic residues; sequence YLEEEENKDKESDYDEDLNF.

The protein belongs to the RNA polymerase beta chain family. The RNAP catalytic core consists of 2 alpha, 1 beta, 1 beta' and 1 omega subunit. When a sigma factor is associated with the core the holoenzyme is formed, which can initiate transcription.

The catalysed reaction is RNA(n) + a ribonucleoside 5'-triphosphate = RNA(n+1) + diphosphate. Functionally, DNA-dependent RNA polymerase catalyzes the transcription of DNA into RNA using the four ribonucleoside triphosphates as substrates. This chain is DNA-directed RNA polymerase subunit beta, found in Clostridium tetani (strain Massachusetts / E88).